The primary structure comprises 166 residues: MFPMVTEFMNYGQQTVRAARYIGQGFMITLSHANRLPVTIQYPYEKLITSERFRGRIHFEFDKCIACEVCVRVCPIDLPVVDWQLETDIRKKRLVNYSIDFGICIFCGNCVEYCPTNCLSMTEEYELSTYDRHELNYNQIALGRLPMSIIDDYTIRTILNLPERKT.

4Fe-4S ferredoxin-type domains are found at residues 55–84 (GRIH…VDWQ) and 95–124 (VNYS…MTEE). 8 residues coordinate [4Fe-4S] cluster: Cys-64, Cys-67, Cys-70, Cys-74, Cys-104, Cys-107, Cys-110, and Cys-114.

This sequence belongs to the complex I 23 kDa subunit family. As to quaternary structure, NDH is composed of at least 16 different subunits, 5 of which are encoded in the nucleus. [4Fe-4S] cluster serves as cofactor.

It localises to the plastid. Its subcellular location is the chloroplast thylakoid membrane. It catalyses the reaction a plastoquinone + NADH + (n+1) H(+)(in) = a plastoquinol + NAD(+) + n H(+)(out). The enzyme catalyses a plastoquinone + NADPH + (n+1) H(+)(in) = a plastoquinol + NADP(+) + n H(+)(out). Functionally, NDH shuttles electrons from NAD(P)H:plastoquinone, via FMN and iron-sulfur (Fe-S) centers, to quinones in the photosynthetic chain and possibly in a chloroplast respiratory chain. The immediate electron acceptor for the enzyme in this species is believed to be plastoquinone. Couples the redox reaction to proton translocation, and thus conserves the redox energy in a proton gradient. This Coreopsis petrophiloides (Tickseed) protein is NAD(P)H-quinone oxidoreductase subunit I, chloroplastic.